The chain runs to 398 residues: tRNA(Ile)-lysidine synthase (398 aa).

ATP is bound at residue 25–30 (SGGVDS).

Belongs to the tRNA(Ile)-lysidine synthase family.

The protein localises to the cytoplasm. The enzyme catalyses cytidine(34) in tRNA(Ile2) + L-lysine + ATP = lysidine(34) in tRNA(Ile2) + AMP + diphosphate + H(+). Functionally, ligates lysine onto the cytidine present at position 34 of the AUA codon-specific tRNA(Ile) that contains the anticodon CAU, in an ATP-dependent manner. Cytidine is converted to lysidine, thus changing the amino acid specificity of the tRNA from methionine to isoleucine. This chain is tRNA(Ile)-lysidine synthase, found in Francisella tularensis subsp. tularensis (strain SCHU S4 / Schu 4).